Here is a 217-residue protein sequence, read N- to C-terminus: MKLIAVLLLVVLATATTATAADADALQDLCVADYASVILVNGFACKPASNVTAEDFFSNLLVKQGATNNTFGSLVTGANVQRIPGLNTLGVSMARIDYAPGGLNPPHTHPRATEMVFVLEGQLDVGFITTTNQLIAKTIAKGETFVFPKGLVHFQKNNGWEPATVIAGFNSQLPGTVNIPLTLFNATPPVPDNVLTKAFQIGTKEVQKIKSKFAPKK.

The N-terminal stretch at 1 to 20 is a signal peptide; it reads MKLIAVLLLVVLATATTATA. A disulfide bridge links Cys-30 with Cys-45. Asn-50 and Asn-68 each carry an N-linked (GlcNAc...) asparagine glycan. A Cupin type-1 domain is found at 58-207; sequence SNLLVKQGAT…AFQIGTKEVQ (150 aa). Mn(2+) is bound by residues His-107, His-109, Glu-114, and His-153.

This sequence belongs to the germin family. In terms of processing, glycosylated.

It localises to the secreted. The protein resides in the extracellular space. It is found in the apoplast. Its subcellular location is the cell wall. Putative receptor for bacterial rhicadhesin, an attachment protein of rhizobiaceae. The polypeptide is Rhicadhesin receptor (GER1) (Pisum sativum (Garden pea)).